We begin with the raw amino-acid sequence, 321 residues long: Fructose-1,6-bisphosphatase 2 class 2 (321 aa).

Mn(2+) contacts are provided by D32, E56, D84, and E87. Substrate-binding positions include 87–89 (EGT), Y118, 163–165 (KPR), 185–187 (DGD), and G209. E212 contacts Mn(2+).

It belongs to the FBPase class 2 family. As to quaternary structure, homodimer. Mn(2+) is required as a cofactor.

It catalyses the reaction beta-D-fructose 1,6-bisphosphate + H2O = beta-D-fructose 6-phosphate + phosphate. Its activity is regulated as follows. Competitively inhibited by low concentrations of phosphate (IC50 of 1.2 mM) and is also sensitive to Li(+) (IC50 of 15.8 mM). Also inhibited by 1 mM ATP or 50 mM KCl (60% and 20% residual activity, respectively). Slightly activated (40-50%) by the addition of 1 mM dithiothreitol in vitro. In terms of biological role, catalyzes the hydrolysis of fructose 1,6-bisphosphate to fructose 6-phosphate. Also displays a low activity toward glucose 1,6-bisphosphate, and no activity against ribulose 1,5-bisphosphate, fructose 2,6-bisphosphate, or fructose 1-phosphate. This is Fructose-1,6-bisphosphatase 2 class 2 (yggF) from Escherichia coli (strain K12).